The chain runs to 962 residues: Leucine-rich repeat-containing G-protein coupled receptor 6 (962 aa).

Positions M1–S16 are cleaved as a signal peptide. The 41-residue stretch at P20–P60 folds into the LRRNT domain. LRR repeat units follow at residues D38–L58, S59–N82, L83–G106, L107–L131, N133–G154, M155–D178, L179–N202, L203–G226, H228–L250, A251–G273, P275–F297, L298–T321, T322–L344, L345–T368, L370–Q390, L391–S414, and Q416–S438. The N-linked (GlcNAc...) asparagine glycan is linked to N71. N202 is a glycosylation site (N-linked (GlcNAc...) asparagine). A run of 7 helical transmembrane segments spans residues G559–F579, F590–A610, S647–G669, A679–V699, F723–I743, V766–S786, and S801–F821. A disulfide bridge links C633 with C708.

It belongs to the G-protein coupled receptor 1 family.

It localises to the cell membrane. Receptor for R-spondins that potentiates the canonical Wnt signaling pathway. Upon binding to R-spondins (rspo1, rspo2, rspo3 or rspo4), associates with phosphorylated lrp6 and frizzled receptors that are activated by extracellular Wnt receptors, triggering the canonical Wnt signaling pathway to increase expression of target genes. In contrast to classical G-protein coupled receptors, does not activate heterotrimeric G-proteins to transduce the signal. This chain is Leucine-rich repeat-containing G-protein coupled receptor 6 (lgr6), found in Danio rerio (Zebrafish).